We begin with the raw amino-acid sequence, 973 residues long: Putative cell agglutination protein pfl3 (973 aa).

Positions 1–24 (MSLFPQILLRLLFLAFTLKSTSNA) are cleaved as a signal peptide. Residues Asn-75, Asn-96, Asn-147, Asn-171, Asn-184, Asn-218, and Asn-253 are each glycosylated (N-linked (GlcNAc...) asparagine). A run of 18 repeats spans residues 198-232 (GTIT…IPTA), 233-267 (GTVT…IPTA), 268-302 (GTRT…LPTA), 303-337 (GTNT…YPTA), 338-372 (GMVT…IPTA), 373-407 (GTVT…IPTA), 408-442 (GTRT…LPTA), 443-477 (GTNT…EPTA), 478-512 (GVVT…EPTA), 513-547 (GVVT…EPTA), 548-582 (GVVT…EPTA), 583-617 (GVVT…EPTA), 618-652 (GVVT…EPTA), 653-687 (GVVT…EPTA), 688-722 (GVVT…EPTA), 723-757 (GVVT…EPTA), 758-792 (GVVT…EPTA), and 793-828 (GYVT…VPSL). The segment at 198–828 (GTITLTTISG…GTVLQVVPSL (631 aa)) is 18 X 35 AA approximate tandem repeats. 2 N-linked (GlcNAc...) asparagine glycosylation sites follow: Asn-352 and Asn-393. Residues 820–973 (TVLQVVPSLF…SNVYFKAVPL (154 aa)) form the DIPSY domain. A glycan (N-linked (GlcNAc...) asparagine) is linked at Asn-848.

The protein belongs to the mam3/map4 family.

Its subcellular location is the cell surface. In terms of biological role, may be involved in agglutination during conjugation or other aspects of colony formation. Induces flocculation when overexpressed. The sequence is that of Putative cell agglutination protein pfl3 from Schizosaccharomyces pombe (strain 972 / ATCC 24843) (Fission yeast).